We begin with the raw amino-acid sequence, 498 residues long: ATP synthase subunit beta, chloroplastic (498 aa).

Gly-172 to Thr-179 contributes to the ATP binding site.

The protein belongs to the ATPase alpha/beta chains family. F-type ATPases have 2 components, CF(1) - the catalytic core - and CF(0) - the membrane proton channel. CF(1) has five subunits: alpha(3), beta(3), gamma(1), delta(1), epsilon(1). CF(0) has four main subunits: a(1), b(1), b'(1) and c(9-12).

It localises to the plastid. Its subcellular location is the chloroplast thylakoid membrane. It carries out the reaction ATP + H2O + 4 H(+)(in) = ADP + phosphate + 5 H(+)(out). Functionally, produces ATP from ADP in the presence of a proton gradient across the membrane. The catalytic sites are hosted primarily by the beta subunits. The chain is ATP synthase subunit beta, chloroplastic from Oryza nivara (Indian wild rice).